Consider the following 206-residue polypeptide: ATP phosphoribosyltransferase (206 aa).

The protein belongs to the ATP phosphoribosyltransferase family. Short subfamily. In terms of assembly, heteromultimer composed of HisG and HisZ subunits.

It is found in the cytoplasm. It catalyses the reaction 1-(5-phospho-beta-D-ribosyl)-ATP + diphosphate = 5-phospho-alpha-D-ribose 1-diphosphate + ATP. It functions in the pathway amino-acid biosynthesis; L-histidine biosynthesis; L-histidine from 5-phospho-alpha-D-ribose 1-diphosphate: step 1/9. Its function is as follows. Catalyzes the condensation of ATP and 5-phosphoribose 1-diphosphate to form N'-(5'-phosphoribosyl)-ATP (PR-ATP). Has a crucial role in the pathway because the rate of histidine biosynthesis seems to be controlled primarily by regulation of HisG enzymatic activity. This Sulfurovum sp. (strain NBC37-1) protein is ATP phosphoribosyltransferase.